Consider the following 476-residue polypeptide: ATP synthase subunit beta, chloroplastic (476 aa).

156–163 (GGAGVGKT) is an ATP binding site.

This sequence belongs to the ATPase alpha/beta chains family. As to quaternary structure, F-type ATPases have 2 components, CF(1) - the catalytic core - and CF(0) - the membrane proton channel. CF(1) has five subunits: alpha(3), beta(3), gamma(1), delta(1), epsilon(1). CF(0) has four main subunits: a(1), b(1), b'(1) and c(9-12).

It is found in the plastid. The protein resides in the chloroplast thylakoid membrane. It catalyses the reaction ATP + H2O + 4 H(+)(in) = ADP + phosphate + 5 H(+)(out). In terms of biological role, produces ATP from ADP in the presence of a proton gradient across the membrane. The catalytic sites are hosted primarily by the beta subunits. The sequence is that of ATP synthase subunit beta, chloroplastic from Fucus vesiculosus (Bladder wrack).